Reading from the N-terminus, the 521-residue chain is Zinc finger CCCH domain-containing protein 45 (521 aa).

Disordered regions lie at residues 28 to 60 (TEDS…GFEG), 142 to 185 (TPAI…PLCS), and 296 to 319 (SRSF…ISPP). Over residues 34–43 (NVASQPQRHS) the composition is skewed to polar residues. The span at 159–168 (EESSNSKVES) shows a compositional bias: low complexity. Positions 170-185 (VTANKQGQLETKPLCS) are enriched in polar residues. The C3H1-type zinc finger occupies 469–497 (NKIHQQCIYFGTANGCNMGDSCTYVHDRY).

This chain is Zinc finger CCCH domain-containing protein 45, found in Arabidopsis thaliana (Mouse-ear cress).